The primary structure comprises 247 residues: UDP-2,3-diacylglucosamine hydrolase (247 aa).

Positions 8, 10, 41, 79, and 114 each coordinate Mn(2+). 79 to 80 (NR) is a substrate binding site. The substrate site is built by Asp-122, Ser-160, Asp-171, Gln-174, and His-202. Mn(2+)-binding residues include His-202 and His-204.

It belongs to the LpxH family. The cofactor is Mn(2+).

The protein resides in the cell inner membrane. It carries out the reaction UDP-2-N,3-O-bis[(3R)-3-hydroxytetradecanoyl]-alpha-D-glucosamine + H2O = 2-N,3-O-bis[(3R)-3-hydroxytetradecanoyl]-alpha-D-glucosaminyl 1-phosphate + UMP + 2 H(+). The protein operates within glycolipid biosynthesis; lipid IV(A) biosynthesis; lipid IV(A) from (3R)-3-hydroxytetradecanoyl-[acyl-carrier-protein] and UDP-N-acetyl-alpha-D-glucosamine: step 4/6. Functionally, hydrolyzes the pyrophosphate bond of UDP-2,3-diacylglucosamine to yield 2,3-diacylglucosamine 1-phosphate (lipid X) and UMP by catalyzing the attack of water at the alpha-P atom. Involved in the biosynthesis of lipid A, a phosphorylated glycolipid that anchors the lipopolysaccharide to the outer membrane of the cell. This chain is UDP-2,3-diacylglucosamine hydrolase, found in Xanthomonas campestris pv. campestris (strain B100).